The primary structure comprises 451 residues: D-ribitol-5-phosphate cytidylyltransferase (451 aa).

The disordered stretch occupies residues 1 to 29; it reads MEAGPPGSARPAEPGPCLSGQRGADHTAS.

This sequence belongs to the IspD/TarI cytidylyltransferase family. IspD subfamily. Homodimer. Ubiquitously expressed, with high expression in brain.

The protein resides in the cytoplasm. The protein localises to the cytosol. It catalyses the reaction D-ribitol 5-phosphate + CTP + H(+) = CDP-L-ribitol + diphosphate. The catalysed reaction is D-ribose 5-phosphate + CTP + H(+) = CDP-D-ribose + diphosphate. The enzyme catalyses D-ribulose 5-phosphate + CTP + H(+) = CDP-D-ribulose + diphosphate. It functions in the pathway protein modification; protein glycosylation. In terms of biological role, cytidylyltransferase required for protein O-linked mannosylation. Catalyzes the formation of CDP-ribitol nucleotide sugar from D-ribitol 5-phosphate. CDP-ribitol is a substrate of FKTN during the biosynthesis of the phosphorylated O-mannosyl trisaccharide (N-acetylgalactosamine-beta-3-N-acetylglucosamine-beta-4-(phosphate-6-)mannose), a carbohydrate structure present in alpha-dystroglycan (DAG1), which is required for binding laminin G-like domain-containing extracellular proteins with high affinity. Shows activity toward other pentose phosphate sugars and mediates formation of CDP-ribulose or CDP-ribose using CTP and ribulose-5-phosphate or ribose-5-phosphate, respectively. Not Involved in dolichol production. The chain is D-ribitol-5-phosphate cytidylyltransferase from Homo sapiens (Human).